The chain runs to 153 residues: Lipoprotein signal peptidase (153 aa).

Helical transmembrane passes span leucine 7 to tyrosine 27, asparagine 59 to methionine 79, and serine 93 to isoleucine 113. Residues aspartate 114 and aspartate 132 contribute to the active site. Residues tryptophan 123–isoleucine 143 traverse the membrane as a helical segment.

It belongs to the peptidase A8 family.

The protein resides in the cell membrane. It carries out the reaction Release of signal peptides from bacterial membrane prolipoproteins. Hydrolyzes -Xaa-Yaa-Zaa-|-(S,diacylglyceryl)Cys-, in which Xaa is hydrophobic (preferably Leu), and Yaa (Ala or Ser) and Zaa (Gly or Ala) have small, neutral side chains.. It participates in protein modification; lipoprotein biosynthesis (signal peptide cleavage). Functionally, this protein specifically catalyzes the removal of signal peptides from prolipoproteins. The protein is Lipoprotein signal peptidase of Wigglesworthia glossinidia brevipalpis.